A 1938-amino-acid chain; its full sequence is Myosin-1 (1938 aa).

The interval 1-27 (MSLEHEKDPGWQYLKRSREQQLADQSR) is disordered. The segment covering 16–27 (RSREQQLADQSR) has biased composition (basic and acidic residues). One can recognise a Myosin N-terminal SH3-like domain in the interval 30-80 (DSKKNVWIPDAEEGYIEGVIKGPGPKADTVIVTAGGKDVTLKKDIVQEVNP). Positions 84-785 (EKTEDMSNLT…VVAHIEDLRD (702 aa)) constitute a Myosin motor domain. Lysine 128 bears the N6,N6,N6-trimethyllysine mark. 177 to 184 (GESGAGKT) is a binding site for ATP. Actin-binding regions lie at residues 660 to 682 (LNKL…IPNE) and 764 to 778 (RIGH…GVVA). The interval 846 to 1170 (QLKCGKMAEE…NKQLEIQQDN (325 aa)) is alpha-helical tailpiece (short S2). Positions 846-1938 (QLKCGKMAEE…GQVVRSATNK (1093 aa)) are rodlike tail (S2 and LMM domains). Positions 846 to 1938 (QLKCGKMAEE…GQVVRSATNK (1093 aa)) form a coiled coil. A disordered region spans residues 919-951 (RQEVEKSLNDANDRLSEHEEKNADLEKQRRKAQ). Basic and acidic residues predominate over residues 920 to 951 (QEVEKSLNDANDRLSEHEEKNADLEKQRRKAQ). Residues 1171–1938 (NKKKDSEIIK…GQVVRSATNK (768 aa)) are light meromyosin (LMM).

This sequence belongs to the TRAFAC class myosin-kinesin ATPase superfamily. Myosin family. Muscle myosin is a hexameric protein that consists of 2 heavy chain subunits (MHC), 2 alkali light chain subunits (MLC) and 2 regulatory light chain subunits (MLC-2). Interacts with itr-1 (via c-terminal coiled coil domain). As to expression, found exclusively in the pharyngeal muscle.

It is found in the cytoplasm. Its subcellular location is the myofibril. Muscle contraction. In Caenorhabditis elegans, this protein is Myosin-1.